The chain runs to 629 residues: tRNA uridine 5-carboxymethylaminomethyl modification enzyme MnmG (629 aa).

13–18 (GGGHAG) contributes to the FAD binding site. 273–287 (GPRYCPSIEDKVNRF) contacts NAD(+).

Belongs to the MnmG family. As to quaternary structure, homodimer. Heterotetramer of two MnmE and two MnmG subunits. Requires FAD as cofactor.

The protein localises to the cytoplasm. NAD-binding protein involved in the addition of a carboxymethylaminomethyl (cmnm) group at the wobble position (U34) of certain tRNAs, forming tRNA-cmnm(5)s(2)U34. This is tRNA uridine 5-carboxymethylaminomethyl modification enzyme MnmG from Shewanella pealeana (strain ATCC 700345 / ANG-SQ1).